Reading from the N-terminus, the 421-residue chain is Imidazolonepropionase (421 aa).

Fe(3+)-binding residues include His-81 and His-83. His-81 and His-83 together coordinate Zn(2+). 4-imidazolone-5-propanoate is bound by residues Arg-90, Tyr-153, and His-186. Position 153 (Tyr-153) interacts with N-formimidoyl-L-glutamate. His-251 serves as a coordination point for Fe(3+). His-251 is a binding site for Zn(2+). Glu-254 is a 4-imidazolone-5-propanoate binding site. Residue Asp-326 coordinates Fe(3+). Asp-326 is a Zn(2+) binding site. Residues Asn-328 and Gly-330 each contribute to the N-formimidoyl-L-glutamate site. Residue Ser-331 coordinates 4-imidazolone-5-propanoate.

It belongs to the metallo-dependent hydrolases superfamily. HutI family. Zn(2+) is required as a cofactor. It depends on Fe(3+) as a cofactor.

Its subcellular location is the cytoplasm. It catalyses the reaction 4-imidazolone-5-propanoate + H2O = N-formimidoyl-L-glutamate. The protein operates within amino-acid degradation; L-histidine degradation into L-glutamate; N-formimidoyl-L-glutamate from L-histidine: step 3/3. In terms of biological role, catalyzes the hydrolytic cleavage of the carbon-nitrogen bond in imidazolone-5-propanoate to yield N-formimidoyl-L-glutamate. It is the third step in the universal histidine degradation pathway. The sequence is that of Imidazolonepropionase from Streptococcus gordonii (strain Challis / ATCC 35105 / BCRC 15272 / CH1 / DL1 / V288).